The primary structure comprises 559 residues: N-acetylglucosamine-6-sulfatase (559 aa).

The tract at residues 1 to 26 (MRFLSLAPDRPRRGGPRHLPSGSPAP) is disordered. Residues 1-47 (MRFLSLAPDRPRRGGPRHLPSGSPAPPPPPPLLLLLLLGGCLGVSGA) form the signal peptide. Ca(2+)-binding residues include Asp-62, Asp-63, and Cys-98. Cys-98 (nucleophile) is an active-site residue. 3-oxoalanine (Cys) is present on Cys-98. N-linked (GlcNAc...) asparagine glycosylation is found at Asn-118, Asn-124, Asn-190, Asn-205, Asn-217, Asn-286, and Asn-324. Ca(2+) contacts are provided by Asp-333 and Asn-334. Asn-369, Asn-394, Asn-412, Asn-429, Asn-456, and Asn-487 each carry an N-linked (GlcNAc...) asparagine glycan. Ser-548 carries the post-translational modification Phosphoserine.

The protein belongs to the sulfatase family. Ca(2+) serves as cofactor. In terms of processing, processed by internal peptidase. The conversion to 3-oxoalanine (also known as C-formylglycine, FGly), of a serine or cysteine residue in prokaryotes and of a cysteine residue in eukaryotes, is critical for catalytic activity.

The protein resides in the lysosome. The enzyme catalyses Hydrolysis of the 6-sulfate groups of the N-acetyl-D-glucosamine 6-sulfate units of heparan sulfate and keratan sulfate.. Functionally, hydrolyzes 6-sulfate groups in N-acetyl-d-glucosaminide units of heparin sulfate and keratan sulfate. The sequence is that of N-acetylglucosamine-6-sulfatase (GNS) from Capra hircus (Goat).